Here is a 454-residue protein sequence, read N- to C-terminus: tRNA modification GTPase MnmE (454 aa).

(6S)-5-formyl-5,6,7,8-tetrahydrofolate-binding residues include Arg-23, Glu-80, and Lys-120. Residues 216 to 377 enclose the TrmE-type G domain; it reads GMKVVIAGRP…LRNHLKQSMG (162 aa). Asn-226 serves as a coordination point for K(+). GTP contacts are provided by residues 226–231, 245–251, 270–273, 335–338, and 358–360; these read NAGKSS, TDIAGTT, DTAG, NKAD, and SAR. Ser-230 serves as a coordination point for Mg(2+). Residues Thr-245, Ile-247, and Thr-250 each contribute to the K(+) site. Thr-251 lines the Mg(2+) pocket. A (6S)-5-formyl-5,6,7,8-tetrahydrofolate-binding site is contributed by Lys-454.

This sequence belongs to the TRAFAC class TrmE-Era-EngA-EngB-Septin-like GTPase superfamily. TrmE GTPase family. As to quaternary structure, homodimer. Heterotetramer of two MnmE and two MnmG subunits. The cofactor is K(+).

Its subcellular location is the cytoplasm. In terms of biological role, exhibits a very high intrinsic GTPase hydrolysis rate. Involved in the addition of a carboxymethylaminomethyl (cmnm) group at the wobble position (U34) of certain tRNAs, forming tRNA-cmnm(5)s(2)U34. This Citrobacter koseri (strain ATCC BAA-895 / CDC 4225-83 / SGSC4696) protein is tRNA modification GTPase MnmE.